The primary structure comprises 148 residues: uncharacterized protein (148 aa).

The protein belongs to the serpin family. Poxviruses subfamily.

This is an uncharacterized protein from Fowlpox virus (strain NVSL) (FPV).